We begin with the raw amino-acid sequence, 487 residues long: Glycogen synthase (487 aa).

K23 serves as a coordination point for ADP-alpha-D-glucose.

It belongs to the glycosyltransferase 1 family. Bacterial/plant glycogen synthase subfamily.

It catalyses the reaction [(1-&gt;4)-alpha-D-glucosyl](n) + ADP-alpha-D-glucose = [(1-&gt;4)-alpha-D-glucosyl](n+1) + ADP + H(+). It participates in glycan biosynthesis; glycogen biosynthesis. Functionally, synthesizes alpha-1,4-glucan chains using ADP-glucose. In Pseudomonas fluorescens (strain Pf0-1), this protein is Glycogen synthase.